The chain runs to 326 residues: N-(2-amino-2-carboxyethyl)-L-glutamate synthase (326 aa).

K47 is modified (N6-(pyridoxal phosphate)lysine). Pyridoxal 5'-phosphate-binding positions include N77, 185 to 189 (STTGS), and S272.

It belongs to the cysteine synthase/cystathionine beta-synthase family. SbnA subfamily. As to quaternary structure, homodimer. Pyridoxal 5'-phosphate is required as a cofactor.

The enzyme catalyses O-phospho-L-serine + L-glutamate = N-[(2S)-2-amino-2-carboxyethyl]-L-glutamate + phosphate + H(+). It participates in siderophore biosynthesis. In terms of biological role, catalyzes the synthesis of N-((2S)-2-amino-2-carboxyethyl)-L-glutamate (ACEGA) from O-phospho-L-serine and L-glutamate. Involved in the biosynthesis of L-2,3-diaminopropionic acid (L-Dap), a precursor of staphyloferrin B and antibiotics. In Staphylococcus aureus (strain COL), this protein is N-(2-amino-2-carboxyethyl)-L-glutamate synthase (sbnA).